Here is a 21-residue protein sequence, read N- to C-terminus: thr operon leader peptide (21 aa).

Belongs to the thr operon leader peptide family.

Functionally, this protein is involved in control of the biosynthesis of threonine. In Shigella boydii serotype 18 (strain CDC 3083-94 / BS512), this protein is thr operon leader peptide.